The chain runs to 438 residues: uncharacterized protein (438 aa).

An FAD-binding PCMH-type domain is found at 23-193; that stretch reads IHAKPPVVVV…VNATIRLTAA (171 aa). Residues 55 to 59, 60 to 61, glutamine 65, aspartate 117, threonine 122, 128 to 132, isoleucine 183, tyrosine 393, and 430 to 433 each bind FAD; these read VRGSG, HS, SVGGF, and APGY. Histidine 60 bears the Pros-8alpha-FAD histidine mark.

It belongs to the oxygen-dependent FAD-linked oxidoreductase family. FAD is required as a cofactor.

Functionally, the FAS-operon encodes genes involved in cytokinin production and in host plant fasciation (leafy gall). This is an uncharacterized protein from Rhodococcoides fascians (Rhodococcus fascians).